Consider the following 250-residue polypeptide: 1-(5-phosphoribosyl)-5-[(5-phosphoribosylamino)methylideneamino] imidazole-4-carboxamide isomerase (250 aa).

Catalysis depends on D8, which acts as the Proton acceptor. The Proton donor role is filled by D131.

Belongs to the HisA/HisF family.

Its subcellular location is the cytoplasm. The enzyme catalyses 1-(5-phospho-beta-D-ribosyl)-5-[(5-phospho-beta-D-ribosylamino)methylideneamino]imidazole-4-carboxamide = 5-[(5-phospho-1-deoxy-D-ribulos-1-ylimino)methylamino]-1-(5-phospho-beta-D-ribosyl)imidazole-4-carboxamide. The protein operates within amino-acid biosynthesis; L-histidine biosynthesis; L-histidine from 5-phospho-alpha-D-ribose 1-diphosphate: step 4/9. The sequence is that of 1-(5-phosphoribosyl)-5-[(5-phosphoribosylamino)methylideneamino] imidazole-4-carboxamide isomerase from Paraburkholderia phytofirmans (strain DSM 17436 / LMG 22146 / PsJN) (Burkholderia phytofirmans).